We begin with the raw amino-acid sequence, 217 residues long: Ras-related protein RIC2 (217 aa).

Residues 21–28 (GDSGVGKS), 69–73 (DTAGQ), and 127–130 (NKSD) contribute to the GTP site. Residues C214 and C215 are each lipidated (S-geranylgeranyl cysteine).

This sequence belongs to the small GTPase superfamily. Rab family.

The protein localises to the cell membrane. Functionally, possesses GTPase activity. The chain is Ras-related protein RIC2 (RIC2) from Oryza sativa subsp. japonica (Rice).